The sequence spans 182 residues: Probable RNA 2'-phosphotransferase (182 aa).

This sequence belongs to the KptA/TPT1 family.

Its function is as follows. Removes the 2'-phosphate from RNA via an intermediate in which the phosphate is ADP-ribosylated by NAD followed by a presumed transesterification to release the RNA and generate ADP-ribose 1''-2''-cyclic phosphate (APPR&gt;P). May function as an ADP-ribosylase. The chain is Probable RNA 2'-phosphotransferase from Acetivibrio thermocellus (strain ATCC 27405 / DSM 1237 / JCM 9322 / NBRC 103400 / NCIMB 10682 / NRRL B-4536 / VPI 7372) (Clostridium thermocellum).